Reading from the N-terminus, the 681-residue chain is Envelope glycoprotein (681 aa).

The N-terminal stretch at 1–18 is a signal peptide; sequence MKTTCLFISLILIQGIKT. Topologically, residues 19-648 are extracellular; sequence LPILEIASNN…GLGGKWWTSD (630 aa). A receptor-binding region spans residues 38–188; sequence SGTLQKTEDV…FSRQGQGYRH (151 aa). N-linked (GlcNAc...) asparagine; by host glycosylation is found at Asn-94, Asn-171, Asn-190, Asn-202, Asn-207, Asn-219, Asn-223, and Asn-255. Positions 223-351 are disordered; the sequence is NQTCAPSKIP…STNNTSKNNF (129 aa). A compositionally biased stretch (low complexity) spans 244–259; that stretch reads PTSTPTDATTLNTTDP. The mucin-like region stretch occupies residues 277–455; that stretch reads EPYTTSDAVT…PFLDGLINAP (179 aa). Polar residues-rich tracts occupy residues 278–290 and 308–341; these read PYTT…KQGL and EGNN…TTAI. Residues Asn-310, Asn-323, Asn-326, Asn-337, Asn-344, Asn-345, Asn-350, Asn-360, Asn-389, Asn-397, Asn-408, and Asn-487 are each glycosylated (N-linked (GlcNAc...) asparagine; by host). Over residues 342–351 the composition is skewed to low complexity; the sequence is STNNTSKNNF. The segment covering 366 to 414 has biased composition (polar residues); that stretch reads TQSTATENEQTSAPSKTTLPPTGNLTTAKSTNNTKGPTTTAPNMTNGHL. The disordered stretch occupies residues 366 to 425; the sequence is TQSTATENEQTSAPSKTTLPPTGNLTTAKSTNNTKGPTTTAPNMTNGHLTSPSPTPNPTT. A fusion peptide region spans residues 529 to 549; the sequence is GLSWIPFFGPGIEGLYTAGLI. Asn-564 and Asn-619 each carry an N-linked (GlcNAc...) asparagine; by host glycan. A helical transmembrane segment spans residues 649-669; sequence WGVLTNLGILLLLSIAVLIAL. The Cytoplasmic segment spans residues 670–681; that stretch reads SCICRIFTKYIG. 2 S-palmitoyl cysteine; by host lipidation sites follow: Cys-671 and Cys-673.

It belongs to the filoviruses glycoprotein family. Homotrimer; each monomer consists of a GP1 and a GP2 subunit linked by disulfide bonds. The resulting peplomers (GP1,2) protrude from the virus surface as spikes. GP1,2 interacts with human CD209 and CLEC4M (collectively referred to as DC-SIGN(R)). Asialoglycoprotein receptor (ASGP-R) may be a liver-specific receptor for GP1,2. Members of the Tyro3 receptor tyrosine kinase family may be cell entry factors interacting with GP1,2. N-glycosylated. In terms of processing, O-glycosylated in the mucin-like region. Post-translationally, specific enzymatic cleavages in vivo yield mature proteins. The precursor is processed into GP1 and GP2 by host cell furin in the trans Golgi, and maybe by other host proteases, to yield the mature GP1 and GP2 proteins. The cleavage site corresponds to the furin optimal cleavage sequence [KR]-X-[KR]-R. GP1 is phosphorylated on serine residues between residues 260 and 273.

The protein localises to the virion membrane. It localises to the host cell membrane. GP1 is responsible for binding to the receptor(s) on target cells. Interacts with CD209/DC-SIGN and CLEC4M/DC-SIGNR which act as cofactors for virus entry into the host cell. Binding to CD209 and CLEC4M, which are respectively found on dendritic cells (DCs), and on endothelial cells of liver sinusoids and lymph node sinuses, facilitate infection of macrophages and endothelial cells. These interactions not only facilitate virus cell entry, but also allow capture of viral particles by DCs and subsequent transmission to susceptible cells without DCs infection (trans infection). Its function is as follows. GP2 acts as a class I viral fusion protein. Under the current model, the protein has at least 3 conformational states: pre-fusion native state, pre-hairpin intermediate state, and post-fusion hairpin state. During viral and target cell membrane fusion, the coiled coil regions (heptad repeats) assume a trimer-of-hairpins structure, positioning the fusion peptide in close proximity to the C-terminal region of the ectodomain. The formation of this structure appears to drive apposition and subsequent fusion of viral and target cell membranes. Responsible for penetration of the virus into the cell cytoplasm by mediating the fusion of the membrane of the endocytosed virus particle with the endosomal membrane. Low pH in endosomes induces an irreversible conformational change in GP2, releasing the fusion hydrophobic peptide. The polypeptide is Envelope glycoprotein (GP) (Lake Victoria marburgvirus (strain Popp-67) (MARV)).